Here is a 301-residue protein sequence, read N- to C-terminus: MPIIIDKDLPARKVLQEENIFVMTKERAETQDIRALKIAILNLMPTKQETEAQLLRLIGNTPLQLDVHLLHMESHLSRNVAQEHLTSFYKTFRDIENEKFDGLIITGAPVETLSFEEVDYWEELKRIMEYSKTNVTSTLHICWGAQAGLYHHYGVQKYPLKEKMFGVFEHEVREQHVKLLQGFDELFFAPHSRHTEVRESDIRGVKELTLLANSEEAGVHLVIGPEGRQVFALGHSEYSCDTLKQEYERDRQKGLNIDVPKNYFKHNNPNEKPLVRWRSHGNLLFSNWLNYYVYQETPYVL.

The active-site Acyl-thioester intermediate is the C142. Positions 163 and 192 each coordinate substrate. H235 acts as the Proton acceptor in catalysis. The active site involves E237. R249 provides a ligand contact to substrate.

This sequence belongs to the MetA family.

The protein resides in the cytoplasm. The catalysed reaction is L-homoserine + acetyl-CoA = O-acetyl-L-homoserine + CoA. The protein operates within amino-acid biosynthesis; L-methionine biosynthesis via de novo pathway; O-acetyl-L-homoserine from L-homoserine: step 1/1. In terms of biological role, transfers an acetyl group from acetyl-CoA to L-homoserine, forming acetyl-L-homoserine. The protein is Homoserine O-acetyltransferase of Bacillus thuringiensis subsp. konkukian (strain 97-27).